The chain runs to 381 residues: Succinyl-diaminopimelate desuccinylase (381 aa).

His-68 provides a ligand contact to Zn(2+). Asp-70 is a catalytic residue. Zn(2+) is bound at residue Asp-101. The Proton acceptor role is filled by Glu-135. Glu-136, Glu-164, and His-350 together coordinate Zn(2+).

The protein belongs to the peptidase M20A family. DapE subfamily. As to quaternary structure, homodimer. Zn(2+) serves as cofactor. It depends on Co(2+) as a cofactor.

It catalyses the reaction N-succinyl-(2S,6S)-2,6-diaminopimelate + H2O = (2S,6S)-2,6-diaminopimelate + succinate. It functions in the pathway amino-acid biosynthesis; L-lysine biosynthesis via DAP pathway; LL-2,6-diaminopimelate from (S)-tetrahydrodipicolinate (succinylase route): step 3/3. Catalyzes the hydrolysis of N-succinyl-L,L-diaminopimelic acid (SDAP), forming succinate and LL-2,6-diaminopimelate (DAP), an intermediate involved in the bacterial biosynthesis of lysine and meso-diaminopimelic acid, an essential component of bacterial cell walls. This is Succinyl-diaminopimelate desuccinylase from Neisseria gonorrhoeae (strain ATCC 700825 / FA 1090).